The primary structure comprises 187 residues: F-box protein At5g41720 (187 aa).

An F-box domain is found at 2-49 (MMNSPLDYDVLLEIMSYCPATEMAKFRLLSKECNKRSYEMSFINRHLH).

This is F-box protein At5g41720 from Arabidopsis thaliana (Mouse-ear cress).